The chain runs to 338 residues: NADPH dehydrogenase (338 aa).

Tyr-28 contributes to the substrate binding site. Positions 60 and 102 each coordinate FMN. Residue 164 to 167 (HAAH) participates in substrate binding. Residues Arg-215 and 307–308 (AR) contribute to the FMN site.

This sequence belongs to the NADH:flavin oxidoreductase/NADH oxidase family. NamA subfamily. Homotetramer. Requires FMN as cofactor.

It carries out the reaction A + NADPH + H(+) = AH2 + NADP(+). Its function is as follows. Catalyzes the reduction of the double bond of an array of alpha,beta-unsaturated aldehydes and ketones. It also reduces the nitro group of nitroester and nitroaromatic compounds. It could have a role in detoxification processes. This is NADPH dehydrogenase from Bacillus velezensis (strain DSM 23117 / BGSC 10A6 / LMG 26770 / FZB42) (Bacillus amyloliquefaciens subsp. plantarum).